Reading from the N-terminus, the 654-residue chain is APC membrane recruitment protein 2 (654 aa).

4 disordered regions span residues Met-1–Leu-105, Glu-224–Gln-289, Ile-316–Ser-369, and Pro-381–Lys-654. The span at Glu-9–Pro-18 shows a compositional bias: pro residues. The segment covering Glu-60–Leu-70 has biased composition (basic and acidic residues). Residues Pro-427–Pro-454 are compositionally biased toward basic and acidic residues. Positions Ser-468–Ser-479 are enriched in polar residues. The span at Ser-565 to Ser-575 shows a compositional bias: low complexity. The segment covering Phe-576–Pro-586 has biased composition (polar residues). Over residues Ser-601–Pro-621 the composition is skewed to low complexity. Over residues Gly-644 to Lys-654 the composition is skewed to polar residues.

It belongs to the Amer family.

The protein localises to the cell membrane. Functionally, negative regulator of the canonical Wnt signaling pathway involved in neuroectodermal patterning. Acts by specifically binding phosphatidylinositol 4,5-bisphosphate (PtdIns(4,5)P2), translocating to the cell membrane and interacting with key regulators of the canonical Wnt signaling pathway, such as components of the beta-catenin destruction complex. This is APC membrane recruitment protein 2 (amer2) from Danio rerio (Zebrafish).